Reading from the N-terminus, the 188-residue chain is Small ribosomal subunit protein uS7 (188 aa).

This sequence belongs to the universal ribosomal protein uS7 family. Part of the 30S ribosomal subunit.

Functionally, one of the primary rRNA binding proteins, it binds directly to 16S rRNA where it nucleates assembly of the head domain of the 30S subunit. Is located at the subunit interface close to the decoding center. The protein is Small ribosomal subunit protein uS7 of Methanococcus maripaludis (strain C6 / ATCC BAA-1332).